Consider the following 307-residue polypeptide: Manganese-dependent inorganic pyrophosphatase (307 aa).

6 residues coordinate Mn(2+): His-7, Asp-11, Asp-13, Asp-66, His-88, and Asp-147.

It depends on Mn(2+) as a cofactor.

Its subcellular location is the cytoplasm. The catalysed reaction is diphosphate + H2O = 2 phosphate + H(+). In Methanocaldococcus jannaschii (strain ATCC 43067 / DSM 2661 / JAL-1 / JCM 10045 / NBRC 100440) (Methanococcus jannaschii), this protein is Manganese-dependent inorganic pyrophosphatase (ppaC).